Consider the following 1080-residue polypeptide: DNA polymerase II large subunit (1080 aa).

Belongs to the archaeal DNA polymerase II family. Heterodimer of a large subunit and a small subunit.

The enzyme catalyses DNA(n) + a 2'-deoxyribonucleoside 5'-triphosphate = DNA(n+1) + diphosphate. It catalyses the reaction Exonucleolytic cleavage in the 3'- to 5'-direction to yield nucleoside 5'-phosphates.. Possesses two activities: a DNA synthesis (polymerase) and an exonucleolytic activity that degrades single-stranded DNA in the 3'- to 5'-direction. Has a template-primer preference which is characteristic of a replicative DNA polymerase. This chain is DNA polymerase II large subunit, found in Picrophilus torridus (strain ATCC 700027 / DSM 9790 / JCM 10055 / NBRC 100828 / KAW 2/3).